Here is a 95-residue protein sequence, read N- to C-terminus: Protein S100-A10 (95 aa).

4 positions are modified to N6-acetyllysine: Lys23, Lys28, Lys54, and Lys57. Positions 47–82 constitute an EF-hand domain; the sequence is KDPLAVDKIMKDLDQCRDGKVGFQSFLSLVAGLIIA. The segment at 60–71 is ancestral calcium site; that stretch reads DQCRDGKVGFQS.

This sequence belongs to the S-100 family. As to quaternary structure, heterotetramer containing 2 light chains of S100A10/p11 and 2 heavy chains of ANXA2/p36. Interacts with SCN10A. Interacts with TASOR.

Its function is as follows. Because S100A10 induces the dimerization of ANXA2/p36, it may function as a regulator of protein phosphorylation in that the ANXA2 monomer is the preferred target (in vitro) of tyrosine-specific kinase. This is Protein S100-A10 (S100a10) from Rattus norvegicus (Rat).